A 262-amino-acid chain; its full sequence is Acyl-[acyl-carrier-protein]--UDP-N-acetylglucosamine O-acyltransferase (262 aa).

This sequence belongs to the transferase hexapeptide repeat family. LpxA subfamily. As to quaternary structure, homotrimer.

The protein resides in the cytoplasm. It catalyses the reaction a (3R)-hydroxyacyl-[ACP] + UDP-N-acetyl-alpha-D-glucosamine = a UDP-3-O-[(3R)-3-hydroxyacyl]-N-acetyl-alpha-D-glucosamine + holo-[ACP]. It participates in glycolipid biosynthesis; lipid IV(A) biosynthesis; lipid IV(A) from (3R)-3-hydroxytetradecanoyl-[acyl-carrier-protein] and UDP-N-acetyl-alpha-D-glucosamine: step 1/6. Involved in the biosynthesis of lipid A, a phosphorylated glycolipid that anchors the lipopolysaccharide to the outer membrane of the cell. The sequence is that of Acyl-[acyl-carrier-protein]--UDP-N-acetylglucosamine O-acyltransferase from Klebsiella pneumoniae (strain 342).